Reading from the N-terminus, the 485-residue chain is GlcNAc-binding protein A (485 aa).

An N-terminal signal peptide occupies residues 1–23; that stretch reads MKKQPKMTAIALILSGISGLAYG. The 178-residue stretch at 24-201 folds into the Chitin-binding type-4 domain; the sequence is HGYVSAVENG…SFYNVIDVKF (178 aa). The 42-residue stretch at 437-478 folds into the Chitin-binding type-3 domain; it reads AGTKVLASDGAIYQCKPWPYSGYCQQWTSNATQYQPGTGSHW.

Belongs to the GbpA family.

It is found in the secreted. Functionally, probably interacts with GlcNAc residues. May promote attachment to both epithelial cell surfaces and chitin. The polypeptide is GlcNAc-binding protein A (Vibrio cholerae serotype O1 (strain ATCC 39541 / Classical Ogawa 395 / O395)).